The primary structure comprises 420 residues: 3-phosphoshikimate 1-carboxyvinyltransferase (420 aa).

Residues K26, S27, and R31 each coordinate 3-phosphoshikimate. K26 is a binding site for phosphoenolpyruvate. Residues G97 and R125 each coordinate phosphoenolpyruvate. Residues S170, S171, Q172, D297, N320, and K324 each contribute to the 3-phosphoshikimate site. Position 172 (Q172) interacts with phosphoenolpyruvate. The active-site Proton acceptor is D297. Phosphoenolpyruvate is bound by residues R328, R375, and K400.

The protein belongs to the EPSP synthase family. In terms of assembly, monomer.

The protein resides in the cytoplasm. The enzyme catalyses 3-phosphoshikimate + phosphoenolpyruvate = 5-O-(1-carboxyvinyl)-3-phosphoshikimate + phosphate. The protein operates within metabolic intermediate biosynthesis; chorismate biosynthesis; chorismate from D-erythrose 4-phosphate and phosphoenolpyruvate: step 6/7. In terms of biological role, catalyzes the transfer of the enolpyruvyl moiety of phosphoenolpyruvate (PEP) to the 5-hydroxyl of shikimate-3-phosphate (S3P) to produce enolpyruvyl shikimate-3-phosphate and inorganic phosphate. The polypeptide is 3-phosphoshikimate 1-carboxyvinyltransferase (Rhizobium etli (strain ATCC 51251 / DSM 11541 / JCM 21823 / NBRC 15573 / CFN 42)).